Consider the following 228-residue polypeptide: Probable endo-1,4-beta-xylanase A (228 aa).

The first 18 residues, 1–18, serve as a signal peptide directing secretion; it reads MVSFSYLLLACSAIGALA. Asparagine 29 is a glycosylation site (N-linked (GlcNAc...) asparagine). One can recognise a GH11 domain in the interval 40-228; that stretch reads AGTPSSTGWN…SSGSASITVY (189 aa). Catalysis depends on glutamate 124, which acts as the Nucleophile. The active-site Proton donor is the glutamate 215.

Belongs to the glycosyl hydrolase 11 (cellulase G) family.

It localises to the secreted. The enzyme catalyses Endohydrolysis of (1-&gt;4)-beta-D-xylosidic linkages in xylans.. It participates in glycan degradation; xylan degradation. In terms of biological role, endo-1,4-beta-xylanase involved in the hydrolysis of xylan, a major structural heterogeneous polysaccharide found in plant biomass representing the second most abundant polysaccharide in the biosphere, after cellulose. The protein is Probable endo-1,4-beta-xylanase A (xlnA) of Aspergillus fumigatus (strain CBS 144.89 / FGSC A1163 / CEA10) (Neosartorya fumigata).